Reading from the N-terminus, the 476-residue chain is Eukaryotic translation initiation factor 3 subunit L (476 aa).

Residues 257–452 (DAIRMFSHIL…DLDYALENDL (196 aa)) enclose the PCI domain.

The protein belongs to the eIF-3 subunit L family. As to quaternary structure, component of the eukaryotic translation initiation factor 3 (eIF-3) complex.

The protein localises to the cytoplasm. Its function is as follows. Component of the eukaryotic translation initiation factor 3 (eIF-3) complex, which is involved in protein synthesis of a specialized repertoire of mRNAs and, together with other initiation factors, stimulates binding of mRNA and methionyl-tRNAi to the 40S ribosome. The eIF-3 complex specifically targets and initiates translation of a subset of mRNAs involved in cell proliferation. This Aspergillus clavatus (strain ATCC 1007 / CBS 513.65 / DSM 816 / NCTC 3887 / NRRL 1 / QM 1276 / 107) protein is Eukaryotic translation initiation factor 3 subunit L.